The sequence spans 97 residues: Large ribosomal subunit protein uL23 (97 aa).

This sequence belongs to the universal ribosomal protein uL23 family. In terms of assembly, part of the 50S ribosomal subunit. Contacts protein L29, and trigger factor when it is bound to the ribosome.

One of the early assembly proteins it binds 23S rRNA. One of the proteins that surrounds the polypeptide exit tunnel on the outside of the ribosome. Forms the main docking site for trigger factor binding to the ribosome. The sequence is that of Large ribosomal subunit protein uL23 from Anaeromyxobacter sp. (strain Fw109-5).